A 101-amino-acid polypeptide reads, in one-letter code: Interleukin-8 (101 aa).

Residues 1–22 (MTSKLAIALLAAFLLSAALCKA) form the signal peptide. Arg-27 is subject to Citrulline. 2 disulfides stabilise this stretch: Cys-34-Cys-61 and Cys-36-Cys-77.

Belongs to the intercrine alpha (chemokine CxC) family. Homodimer. In terms of processing, citrullination at Arg-27 prevents proteolysis, and dampens tissue inflammation, it also enhances leukocytosis, possibly through impaired chemokine clearance from the blood circulation.

The protein localises to the secreted. Chemotactic factor that mediates inflammatory response by attracting neutrophils, basophils, and T-cells to clear pathogens and protect the host from infection. Also plays an important role in neutrophil activation. Released in response to an inflammatory stimulus, exerts its effect by binding to the G-protein-coupled receptors CXCR1 and CXCR2, primarily found in neutrophils, monocytes and endothelial cells. G-protein heterotrimer (alpha, beta, gamma subunits) constitutively binds to CXCR1/CXCR2 receptor and activation by IL8 leads to beta and gamma subunits release from Galpha (GNAI2 in neutrophils) and activation of several downstream signaling pathways including PI3K and MAPK pathways. The chain is Interleukin-8 (CXCL8) from Tursiops truncatus (Atlantic bottle-nosed dolphin).